Reading from the N-terminus, the 282-residue chain is Elongation factor Ts (282 aa).

The interval 79 to 82 (TDFV) is involved in Mg(2+) ion dislocation from EF-Tu.

Belongs to the EF-Ts family.

The protein resides in the cytoplasm. Functionally, associates with the EF-Tu.GDP complex and induces the exchange of GDP to GTP. It remains bound to the aminoacyl-tRNA.EF-Tu.GTP complex up to the GTP hydrolysis stage on the ribosome. This is Elongation factor Ts from Shewanella piezotolerans (strain WP3 / JCM 13877).